Here is a 1997-residue protein sequence, read N- to C-terminus: Autophagy-related protein 2 homolog A (1997 aa).

Residues cysteine 17–glutamine 119 enclose the Chorein N-terminal domain. Disordered regions lie at residues threonine 241 to isoleucine 281, histidine 1292 to alanine 1323, glutamate 1371 to aspartate 1414, serine 1492 to glycine 1534, and arginine 1684 to aspartate 1718. Pro residues predominate over residues proline 1311–leucine 1321. Polar residues-rich tracts occupy residues arginine 1393 to serine 1408, serine 1493 to glutamine 1532, and lysine 1690 to aspartate 1718.

Belongs to the ATG2 family.

The protein localises to the preautophagosomal structure membrane. It localises to the lipid droplet. It is found in the endoplasmic reticulum membrane. It catalyses the reaction a 1,2-diacyl-sn-glycero-3-phospho-L-serine(in) = a 1,2-diacyl-sn-glycero-3-phospho-L-serine(out). It carries out the reaction a 1,2-diacyl-sn-glycero-3-phosphoethanolamine(in) = a 1,2-diacyl-sn-glycero-3-phosphoethanolamine(out). Its function is as follows. Lipid transfer protein involved in autophagosome assembly. Tethers the edge of the isolation membrane (IM) to the endoplasmic reticulum (ER) and mediates direct lipid transfer from ER to IM for IM expansion. Binds to the ER exit site (ERES), which is the membrane source for autophagosome formation, and extracts phospholipids from the membrane source and transfers them to atg9 (atg9a or atg9b) to the IM for membrane expansion. Also regulates lipid droplets morphology and distribution within the cell. In Xenopus tropicalis (Western clawed frog), this protein is Autophagy-related protein 2 homolog A.